The sequence spans 406 residues: MAAKKQSKSAKALRTTVRYEDVAVSFTQEEWEYLTSTQKTLYQKVMSETFKNLTFVESKKKPQEPNPNLKDKDDDKSSTCTGVFKGGPFFFCLTCGKCFKKNTFLFNHQFPVRSRRLAVTKPQSRKALGHKPQHRGDRPFFCNLCGKTYRDASGLSRHRRAHVGYRPRSCPECGKCFRDQSEVNRHLKVHQNKKPVAGSHVKVHQNKPVASNQKQKGRVPPTTRESPAPALRHLKVIQGPVARAKARSSRASSLEVRSTSVTVARPREKVYCPYCRITFTMRTCLLNHLKIHFRRQPNQHFCCKESHSSNTLRMQKIYNCPVCDSSFRGKESLLNHLCSRRPIRLSKCWEILGHLLGYLREPLGNIFKVRESRKRRRKRISSDSSETEGPSGSDEVMEVDTDSDLS.

A KRAB domain is found at 17–88; that stretch reads VRYEDVAVSF…TCTGVFKGGP (72 aa). The interval 57–77 is disordered; the sequence is ESKKKPQEPNPNLKDKDDDKS. The C2H2-type 1; degenerate zinc-finger motif lies at 90 to 113; the sequence is FFCLTCGKCFKKNTFLFNHQFPVR. C2H2-type zinc fingers lie at residues 140 to 162 and 168 to 190; these read FFCN…RRAH and RSCP…LKVH. A disordered region spans residues 194-226; the sequence is KPVAGSHVKVHQNKPVASNQKQKGRVPPTTRES. The C2H2-type 4 zinc finger occupies 270–292; the sequence is VYCPYCRITFTMRTCLLNHLKIH. The segment at 318–337 adopts a C2H2-type 5; degenerate zinc-finger fold; sequence YNCPVCDSSFRGKESLLNHL. Residues 372 to 406 are disordered; sequence SRKRRRKRISSDSSETEGPSGSDEVMEVDTDSDLS. Positions 395-406 are enriched in acidic residues; that stretch reads EVMEVDTDSDLS.

Belongs to the krueppel C2H2-type zinc-finger protein family. In terms of tissue distribution, expressed in oligodendrocytes and at lower levels in astrocytes.

The protein localises to the nucleus. In terms of biological role, transcription regulator required to maintain maternal and paternal gene imprinting, a process by which gene expression is restricted in a parent of origin-specific manner by epigenetic modification of genomic DNA and chromatin, including DNA methylation. Acts by controlling DNA methylation during the earliest multicellular stages of development at multiple imprinting control regions (ICRs). Acts together with ZNF445. Required for the establishment of maternal methylation imprints at SNRPN locus. Acts as a transcriptional repressor in Schwann cells. Binds to a 5'-TGCCGC-3' consensus sequence and recognizes the methylated CpG within this element. This chain is Zinc finger protein 57 (Zfp57), found in Rattus norvegicus (Rat).